We begin with the raw amino-acid sequence, 234 residues long: Zinc finger FYVE domain-containing protein 21 (234 aa).

The segment at 44 to 104 adopts an FYVE-type zinc-finger fold; the sequence is DKECRRCMQC…QCAECALVSL (61 aa). Zn(2+)-binding residues include Cys-50, Cys-53, Cys-66, Cys-69, Cys-74, Cys-77, Cys-96, and Cys-99. The PH-like stretch occupies residues 107-234; sequence AEFYDKQLKV…AKLLYESRDQ (128 aa).

Interacts with PTK2/FAK1.

The protein resides in the cell junction. The protein localises to the focal adhesion. It is found in the cytoplasmic vesicle. It localises to the endosome. In terms of biological role, plays a role in cell adhesion, and thereby in cell motility which requires repeated formation and disassembly of focal adhesions. Regulates microtubule-induced PTK2/FAK1 dephosphorylation, an event important for focal adhesion disassembly, as well as integrin beta-1/ITGB1 cell surface expression. The protein is Zinc finger FYVE domain-containing protein 21 (ZFYVE21) of Homo sapiens (Human).